Consider the following 234-residue polypeptide: Mediator of RNA polymerase II transcription subunit 4 (234 aa).

Residues 71 to 124 (HQEAYRRLVEKKNEVAGLEMRVRGLVKRLEEGRKELEGMIDQGERSLEDIQKSE) are a coiled coil. Positions 188–234 (GVVGEEQKAPQKVEERREHVEHEESGRRYDPNAVFQLDLNSDESDED) are disordered. Positions 189-217 (VVGEEQKAPQKVEERREHVEHEESGRRYD) are enriched in basic and acidic residues.

It belongs to the Mediator complex subunit 4 family. As to quaternary structure, component of the Mediator complex.

It localises to the nucleus. Its function is as follows. Component of the Mediator complex, a coactivator involved in the regulated transcription of nearly all RNA polymerase II-dependent genes. Mediator functions as a bridge to convey information from gene-specific regulatory proteins to the basal RNA polymerase II transcription machinery. Mediator is recruited to promoters by direct interactions with regulatory proteins and serves as a scaffold for the assembly of a functional preinitiation complex with RNA polymerase II and the general transcription factors. The chain is Mediator of RNA polymerase II transcription subunit 4 (MED4) from Cryptococcus neoformans var. neoformans serotype D (strain B-3501A) (Filobasidiella neoformans).